A 126-amino-acid polypeptide reads, in one-letter code: Ribosome-binding factor A (126 aa).

This sequence belongs to the RbfA family. Monomer. Binds 30S ribosomal subunits, but not 50S ribosomal subunits or 70S ribosomes.

It localises to the cytoplasm. Its function is as follows. One of several proteins that assist in the late maturation steps of the functional core of the 30S ribosomal subunit. Associates with free 30S ribosomal subunits (but not with 30S subunits that are part of 70S ribosomes or polysomes). Required for efficient processing of 16S rRNA. May interact with the 5'-terminal helix region of 16S rRNA. This chain is Ribosome-binding factor A, found in Clostridioides difficile (strain 630) (Peptoclostridium difficile).